The sequence spans 460 residues: tRNA(Ile)-lysidine synthase (460 aa).

30–35 provides a ligand contact to ATP; it reads SGGLDS.

Belongs to the tRNA(Ile)-lysidine synthase family.

It localises to the cytoplasm. The enzyme catalyses cytidine(34) in tRNA(Ile2) + L-lysine + ATP = lysidine(34) in tRNA(Ile2) + AMP + diphosphate + H(+). Ligates lysine onto the cytidine present at position 34 of the AUA codon-specific tRNA(Ile) that contains the anticodon CAU, in an ATP-dependent manner. Cytidine is converted to lysidine, thus changing the amino acid specificity of the tRNA from methionine to isoleucine. This chain is tRNA(Ile)-lysidine synthase, found in Yersinia pestis.